The chain runs to 206 residues: Ribosomal RNA small subunit methyltransferase G (206 aa).

S-adenosyl-L-methionine contacts are provided by residues glycine 73, leucine 78, 124–125 (VE), and arginine 139.

It belongs to the methyltransferase superfamily. RNA methyltransferase RsmG family.

The protein localises to the cytoplasm. It catalyses the reaction guanosine(527) in 16S rRNA + S-adenosyl-L-methionine = N(7)-methylguanosine(527) in 16S rRNA + S-adenosyl-L-homocysteine. In terms of biological role, specifically methylates the N7 position of guanine in position 527 of 16S rRNA. This Edwardsiella ictaluri (strain 93-146) protein is Ribosomal RNA small subunit methyltransferase G.